Reading from the N-terminus, the 155-residue chain is SsrA-binding protein (155 aa).

The protein belongs to the SmpB family.

It localises to the cytoplasm. Required for rescue of stalled ribosomes mediated by trans-translation. Binds to transfer-messenger RNA (tmRNA), required for stable association of tmRNA with ribosomes. tmRNA and SmpB together mimic tRNA shape, replacing the anticodon stem-loop with SmpB. tmRNA is encoded by the ssrA gene; the 2 termini fold to resemble tRNA(Ala) and it encodes a 'tag peptide', a short internal open reading frame. During trans-translation Ala-aminoacylated tmRNA acts like a tRNA, entering the A-site of stalled ribosomes, displacing the stalled mRNA. The ribosome then switches to translate the ORF on the tmRNA; the nascent peptide is terminated with the 'tag peptide' encoded by the tmRNA and targeted for degradation. The ribosome is freed to recommence translation, which seems to be the essential function of trans-translation. This is SsrA-binding protein from Gloeothece citriformis (strain PCC 7424) (Cyanothece sp. (strain PCC 7424)).